The following is a 121-amino-acid chain: MRNWRWLLLVLAVLLAWLQYRFWFGPGNSGEVMMLEAQVAHQTQDNEGLRQRNQALAAEVKDLKDGEAAIEERARSELGMIKPGETFYRVVEDAPLPAPASPEAPAPPQQAPEPIDPVDHP.

Residues 1 to 6 are Cytoplasmic-facing; sequence MRNWRW. Residues 7 to 24 form a helical membrane-spanning segment; it reads LLLVLAVLLAWLQYRFWF. Residues 25–121 lie on the Periplasmic side of the membrane; that stretch reads GPGNSGEVMM…PEPIDPVDHP (97 aa). Residues 31 to 66 adopt a coiled-coil conformation; sequence EVMMLEAQVAHQTQDNEGLRQRNQALAAEVKDLKDG. Residues 92–121 form a disordered region; it reads EDAPLPAPASPEAPAPPQQAPEPIDPVDHP. The span at 96 to 115 shows a compositional bias: pro residues; the sequence is LPAPASPEAPAPPQQAPEPI.

It belongs to the FtsB family. In terms of assembly, part of a complex composed of FtsB, FtsL and FtsQ.

Its subcellular location is the cell inner membrane. Functionally, essential cell division protein. May link together the upstream cell division proteins, which are predominantly cytoplasmic, with the downstream cell division proteins, which are predominantly periplasmic. The sequence is that of Cell division protein FtsB from Xanthomonas euvesicatoria pv. vesicatoria (strain 85-10) (Xanthomonas campestris pv. vesicatoria).